The sequence spans 388 residues: MNLHEYQAKELLASYGLPVQGGILAHNGEEAAAAYDKLGGKFAVVKAQVHAGGRGKAGGVKVVKSREKAKEVAESLIGTNLVTYQTDANGQPVNSVLVCEDMYPVQTELYLGAVVDRSTRRVTFMASTEGGVEIEKVAAETPEKIFKVTVDPLVGLQPCQAREVAFQLGLKDKQINEFAKLMTGAYKAFVENDFALFEVNPLAVRENGALACVDGKIGIDSNALYRLPKIAELRDKSQENERELKASEFDLNYVALEGKIGCMVNGAGLAMATMDIIKLKGGQPANFLDVGGGATKDRVVEAFKLILEDKSVKGVLINIFGGIVRCDMIAEAIVAAVKEINVNVPVVVRLEGNNAELGAKILNESGLKLTSADGLNDAAEKIVAAVNA.

The ATP-grasp domain occupies 9 to 245 (KELLASYGLP…KSQENERELK (237 aa)). ATP contacts are provided by residues Lys46, 53 to 55 (GRG), Glu100, Tyr103, and Glu108. 2 residues coordinate Mg(2+): Asn200 and Asp214. Substrate is bound by residues Asn265 and 322–324 (GIV).

The protein belongs to the succinate/malate CoA ligase beta subunit family. Heterotetramer of two alpha and two beta subunits. Mg(2+) serves as cofactor.

It carries out the reaction succinate + ATP + CoA = succinyl-CoA + ADP + phosphate. The enzyme catalyses GTP + succinate + CoA = succinyl-CoA + GDP + phosphate. It participates in carbohydrate metabolism; tricarboxylic acid cycle; succinate from succinyl-CoA (ligase route): step 1/1. Succinyl-CoA synthetase functions in the citric acid cycle (TCA), coupling the hydrolysis of succinyl-CoA to the synthesis of either ATP or GTP and thus represents the only step of substrate-level phosphorylation in the TCA. The beta subunit provides nucleotide specificity of the enzyme and binds the substrate succinate, while the binding sites for coenzyme A and phosphate are found in the alpha subunit. This chain is Succinate--CoA ligase [ADP-forming] subunit beta, found in Neisseria gonorrhoeae (strain ATCC 700825 / FA 1090).